The chain runs to 216 residues: UDP-N-acetylglucosamine transferase subunit ALG14 (216 aa).

Residues 1–3 lie on the Lumenal side of the membrane; the sequence is MVC. A helical transmembrane segment spans residues 4-24; the sequence is VLVLAAAAGAVAVFLILRIWV. The Cytoplasmic portion of the chain corresponds to 25 to 216; that stretch reads VLRSMDVTPR…PKSVYLGRIV (192 aa).

It belongs to the ALG14 family. In terms of assembly, forms with ALG13 the active heterodimeric UDP-N-acetylglucosamine transferase complex.

Its subcellular location is the endoplasmic reticulum membrane. In terms of biological role, part of the UDP-N-acetylglucosamine transferase complex that operates in the biosynthetic pathway of dolichol-linked oligosaccharides, the glycan precursors employed in protein asparagine (N)-glycosylation. The assembly of dolichol-linked oligosaccharides begins on the cytosolic side of the endoplasmic reticulum membrane and finishes in its lumen. The sequential addition of sugars to dolichol pyrophosphate produces dolichol-linked oligosaccharides containing fourteen sugars, including two GlcNAcs, nine mannoses and three glucoses. Once assembled, the oligosaccharides are transferred from the lipid to nascent proteins by oligosaccharyltransferases. Functions as a protein-membrane adapter recruiting ALG13 at the cytoplasmic face of the endoplasmic reticulum, where the complex catalyzes the second step of dolichol pyrophosphate biosynthesis, transferring a beta1,4-linked N-acetylglucosamine (GlcNAc) from UDP-GlcNAc to GlcNAc-pyrophosphatedolichol (Gn-PDol) to produce N,N'-diacetylchitobiosyl diphosphodolichol. N,N'-diacetylchitobiosyl diphosphodolichol is a substrate for ALG1, the following enzyme in the biosynthetic pathway. This Homo sapiens (Human) protein is UDP-N-acetylglucosamine transferase subunit ALG14.